The primary structure comprises 136 residues: Large ribosomal subunit protein uL16 (136 aa).

Belongs to the universal ribosomal protein uL16 family. As to quaternary structure, part of the 50S ribosomal subunit.

Binds 23S rRNA and is also seen to make contacts with the A and possibly P site tRNAs. The protein is Large ribosomal subunit protein uL16 of Shewanella baltica (strain OS155 / ATCC BAA-1091).